Here is a 91-residue protein sequence, read N- to C-terminus: DNA-directed RNA polymerase subunit omega (91 aa).

It belongs to the RNA polymerase subunit omega family. The RNAP catalytic core consists of 2 alpha, 1 beta, 1 beta' and 1 omega subunit. When a sigma factor is associated with the core the holoenzyme is formed, which can initiate transcription.

It catalyses the reaction RNA(n) + a ribonucleoside 5'-triphosphate = RNA(n+1) + diphosphate. In terms of biological role, promotes RNA polymerase assembly. Latches the N- and C-terminal regions of the beta' subunit thereby facilitating its interaction with the beta and alpha subunits. The sequence is that of DNA-directed RNA polymerase subunit omega from Erwinia tasmaniensis (strain DSM 17950 / CFBP 7177 / CIP 109463 / NCPPB 4357 / Et1/99).